Reading from the N-terminus, the 364-residue chain is Protein PROCA1 (364 aa).

Residues 172 to 182 are compositionally biased toward acidic residues; sequence LNEEEEEEEEE. The tract at residues 172-364 is disordered; sequence LNEEEEEEEE…SPPGSNPNLS (193 aa). Positions 203–223 are enriched in polar residues; it reads SMATGTPDSTAPITIWRSESP. Basic residues predominate over residues 232 to 241; the sequence is VIKKVKKKKE. Over residues 242–253 the composition is skewed to basic and acidic residues; that stretch reads KEKDKEEMDEKA. Positions 254–270 are enriched in basic residues; sequence KLKKKAKKGQLTKKKSP. Phosphoserine is present on residues Ser276, Ser308, Ser318, Ser319, Ser355, and Ser364.

It belongs to the PROCA1 family. High expressed in testis.

The protein is Protein PROCA1 (PROCA1) of Homo sapiens (Human).